Here is a 241-residue protein sequence, read N- to C-terminus: Isoprenyl transferase (241 aa).

D17 is a catalytic residue. D17 contributes to the Mg(2+) binding site. Residues 18–21 (GNGR), W22, R30, H34, and 62–64 (STE) contribute to the substrate site. Catalysis depends on N65, which acts as the Proton acceptor. Substrate is bound by residues W66, R68, R186, and 192–194 (RLS). Residue E205 participates in Mg(2+) binding.

This sequence belongs to the UPP synthase family. Homodimer. It depends on Mg(2+) as a cofactor.

Functionally, catalyzes the condensation of isopentenyl diphosphate (IPP) with allylic pyrophosphates generating different type of terpenoids. This chain is Isoprenyl transferase, found in Leptospira interrogans serogroup Icterohaemorrhagiae serovar copenhageni (strain Fiocruz L1-130).